Consider the following 24-residue polypeptide: Brevinin-1Sb (24 aa).

Cys-18 and Cys-24 are joined by a disulfide.

As to expression, expressed by the skin glands.

Its subcellular location is the secreted. Functionally, antibacterial activity against Gram-negative bacterium E.coli. This chain is Brevinin-1Sb, found in Lithobates sphenocephalus (Southern leopard frog).